Here is a 433-residue protein sequence, read N- to C-terminus: Pectinesterase B (433 aa).

The signal sequence occupies residues 1 to 21; sequence MSLTHYSGLAAAVSMSLILTA. A lipid anchor (N-palmitoyl cysteine) is attached at C22. C22 carries S-diacylglycerol cysteine lipidation. Topologically, residues 22–433 are periplasmic; the sequence is CGGQTPNSAR…EYNTQVLLHE (412 aa). Residues T202 and Q236 each contribute to the substrate site. D259 functions as the Proton donor in the catalytic mechanism. D292 acts as the Nucleophile in catalysis. Substrate contacts are provided by R356 and W358.

Belongs to the pectinesterase family.

It localises to the cell outer membrane. It carries out the reaction [(1-&gt;4)-alpha-D-galacturonosyl methyl ester](n) + n H2O = [(1-&gt;4)-alpha-D-galacturonosyl](n) + n methanol + n H(+). It functions in the pathway glycan metabolism; pectin degradation; 2-dehydro-3-deoxy-D-gluconate from pectin: step 1/5. Its function is as follows. Probably involved in the degradation of methylated oligogalacturonides present in the periplasm. More active on methylated oligogalacturides than on pectin. The chain is Pectinesterase B from Dickeya dadantii (strain 3937) (Erwinia chrysanthemi (strain 3937)).